We begin with the raw amino-acid sequence, 264 residues long: Proliferating cell nuclear antigen 2 (264 aa).

A DNA-binding region spans residues 61–80; the sequence is RCDRNLSMGMNLGNMSKMLK.

This sequence belongs to the PCNA family. As to quaternary structure, homo- and heterotrimer. Interacts with POLH, ATXR5 and ATXR6.

Its subcellular location is the nucleus. In terms of biological role, this protein is an auxiliary protein of DNA polymerase delta and is involved in the control of eukaryotic DNA replication by increasing the polymerase's processibility during elongation of the leading strand. May be involved in UV resistance. In Arabidopsis thaliana (Mouse-ear cress), this protein is Proliferating cell nuclear antigen 2 (PCNA2).